We begin with the raw amino-acid sequence, 540 residues long: Chaperonin GroEL 4 (540 aa).

Residues 29–32 (TLGP), 86–90 (DGTTT), G413, 477–479 (NAA), and D493 each bind ATP.

This sequence belongs to the chaperonin (HSP60) family. Forms a cylinder of 14 subunits composed of two heptameric rings stacked back-to-back. Interacts with the co-chaperonin GroES.

Its subcellular location is the cytoplasm. It catalyses the reaction ATP + H2O + a folded polypeptide = ADP + phosphate + an unfolded polypeptide.. Together with its co-chaperonin GroES, plays an essential role in assisting protein folding. The GroEL-GroES system forms a nano-cage that allows encapsulation of the non-native substrate proteins and provides a physical environment optimized to promote and accelerate protein folding. The polypeptide is Chaperonin GroEL 4 (Frankia alni (strain DSM 45986 / CECT 9034 / ACN14a)).